Here is a 173-residue protein sequence, read N- to C-terminus: Microfibrillar-associated protein 5 (173 aa).

Residues 1-21 (MSLLGPKVLLFLAAFIITSDW) form the signal peptide. A Cell attachment site motif is present at residues 30 to 32 (RGD). Thr-54 is a glycosylation site (O-linked (GalNAc...) threonine). Asn-79 carries N-linked (GlcNAc...) asparagine glycosylation.

The protein belongs to the MFAP family. As to quaternary structure, interacts with TGFB2. Interacts with BMP2. Interacts with FBN1 (via N-terminal domain) and FBN2. Post-translationally, forms intermolecular disulfide bonds either with other MAGP-2 molecules or with other components of the microfibrils. N- and O-glycosylated. O-glycosylated with core 1 or possibly core 8 glycans. O-glycan heterogeneity at Thr-54: HexHexNAc (major) and HexHexNAc + sulfate (minor).

It is found in the secreted. The protein resides in the extracellular space. Its subcellular location is the extracellular matrix. Functionally, may play a role in hematopoiesis. In the cardiovascular system, could regulate growth factors or participate in cell signaling in maintaining large vessel integrity. Component of the elastin-associated microfibrils. This chain is Microfibrillar-associated protein 5 (MFAP5), found in Homo sapiens (Human).